Reading from the N-terminus, the 792-residue chain is Phosphatidylinositol 4-phosphate 5-kinase type-1 sktl (792 aa).

Residues M1–Q21 are compositionally biased toward basic and acidic residues. Disordered regions lie at residues M1–T74, T105–G139, A423–E446, T577–A612, and A640–S714. Polar residues-rich tracts occupy residues Q52–P62 and T105–G131. The PIPK domain maps to Q155 to V573. The span at S642 to N658 shows a compositional bias: low complexity. Polar residues predominate over residues E678–D702.

As to quaternary structure, interacts with ash2 (via B30.2/SPRY domain); the interaction is direct and seems to be specific for ash2 isoform B.

It is found in the cytoplasm. It localises to the cell cortex. The protein localises to the nucleus. Its subcellular location is the chromosome. The protein resides in the apical cell membrane. It is found in the cell projection. It localises to the cilium. The protein localises to the flagellum membrane. It carries out the reaction a 1,2-diacyl-sn-glycero-3-phospho-(1D-myo-inositol 4-phosphate) + ATP = a 1,2-diacyl-sn-glycero-3-phospho-(1D-myo-inositol-4,5-bisphosphate) + ADP + H(+). Catalyzes the phosphorylation of phosphatidylinositol 4-phosphate (PtdIns[4]P) to form phosphatidylinositol 4,5-bisphosphate (PtdIns[4,5]P(2)), a lipid second messenger that regulates several cellular processes such as signal transduction, vesicle trafficking, actin cytoskeleton dynamics, cell adhesion, and cell motility. PtdIns[4,5]P(2) can directly act as a second messenger or can be utilized as a precursor to generate other second messengers: inositol 1,4,5-trisphosphate (IP3), diacylglycerol (DAG) or phosphatidylinositol-3,4,5-trisphosphate (PtdIns[3,4,5]P(3)). Required for germline development during oogenesis. Sktl is the major phosphatidylinositol 4-phosphate 5-kinase responsible for enrichment of PtdIns[4,5]P(2) in the apical plasma membrane of the oocyte and follicular epithelium cells of the egg chamber during oogenesis. Involved in nuclear anchoring and microtubule organization required for targeted mRNA transport during maintenance of oocyte polarity. The PtdIns[4,5]P(2) produced by sktl is required for maintenance of cellular polarity, prevention of the epithelial-mesenchymal transition process, maintenance of adherens junctions and regulation of apical constriction, probably by affecting polarized cortical recruitment of PAR proteins and their effectors, including baz/bazooka, aPKC, par-1 and l(2)gl. Involved in actin cytoskeleton organization probably through PtdIns[4,5]P(2)-mediated regulation of Moe/Moesin phosphorylation. Involved in PtdIns[4,5]P(2)-mediated apical recruitment of the formin dia/diaphanous in tubular epithelial cells. Involved in anterodorsal cell morphogenesis and eggshell dorsal appendage formation, probably through regulation of apical constriction by PtdIns[4,5]P(2) during tubulogenesis. Required for cell viability or proliferation during wing and eye imaginal disk development. May be involved in cytoskeletal regulation during sensory bristle development. Together with mys/integrin beta localizes to the trailing edge of larval epidermal cells in a JNK signaling-dependent manner during wound healing and is required for setting up cell polarity and re-epithelialization. Required for polarization of elongating spermatid cysts possibly by generation of PtdIns[4,5]P(2) involved in mediating membrane association and orientation of the nucleus-basal body pair. Probably involved in PtdIns[4,5]P(2)-mediated recruitment of exocyst proteins that may mediate membrane addition during spermatid elongation. Involved in maintenance of specialised cell contacts known as slit diaphragms required for nephrocyte morphogenesis and function. Regulates nephrocyte endocytosis, possibly through PtdIns[4,5]P(2)-mediated recruitment of effector proteins. Not required for nervous system development or neurotransmitter release at the neuromuscular junction. Together with ash2 probably plays a role in maintenance of transcriptionally active chromatin through down-regulation of histone H1 hyperphosphorylation. This Drosophila melanogaster (Fruit fly) protein is Phosphatidylinositol 4-phosphate 5-kinase type-1 sktl.